The primary structure comprises 238 residues: Ribonuclease PH (238 aa).

Phosphate is bound by residues Arg86 and Gly124–Arg126.

The protein belongs to the RNase PH family. As to quaternary structure, homohexameric ring arranged as a trimer of dimers.

It carries out the reaction tRNA(n+1) + phosphate = tRNA(n) + a ribonucleoside 5'-diphosphate. Its function is as follows. Phosphorolytic 3'-5' exoribonuclease that plays an important role in tRNA 3'-end maturation. Removes nucleotide residues following the 3'-CCA terminus of tRNAs; can also add nucleotides to the ends of RNA molecules by using nucleoside diphosphates as substrates, but this may not be physiologically important. Probably plays a role in initiation of 16S rRNA degradation (leading to ribosome degradation) during starvation. The sequence is that of Ribonuclease PH from Geobacter sulfurreducens (strain ATCC 51573 / DSM 12127 / PCA).